Consider the following 693-residue polypeptide: MALTAAELEAIRRGLGRGPTPVELALFTAHWSEHCAYKSTRGRLSRLPSKAPWVVKGPGTDAPLVEVAPGLYVTFKIESHNHPSAVDPYNGAATGVGGIIRDILTVGAKPIALLVNLHFGPPQDAHAKWIAQGVVRGISDYGNRVGVPVVGGETWFDEDFTYTPIVLATCVGVVSAEDVPRGGVEAGDLFIVVGSGADKSGLGGSAFASKTLTEEEDLGAVQVADPLMGKRLIDLVQEARQCVKYIKDLGGGGLATAAAELAHWFGLGLEIDLDKIHMSDAEMGPAEVLISETQERLVLVTSEGQLPCLKALFEKYDVPYSVVGRFTEGGRLVFKWRGEVVGDVPVELAANAPVLEWPTRPYKAKPLPDLPQPPLDKAIDAVLSSPNVAKKAAIYERFDFDVGVRTVVKPGEGDAAVLKLLELGDVGIVVKGDANPRYTYLSPRLGAANAFVKAYRNVVVARGIPLAAVDSINLGSPARPEVYWQFVEAVEGLAEAAEALGVPIVGGKVSLYNEYLDKPIKPVVAVVVLGKIDDVGKAAKATWEAGDGIYLWGVTKAEVGGSEYLYRIFGEVAGEPPAVDYAVEKEILRLVGTWRPRKATDVGLGGLAAALAKMAVNSGVGADVDICKAPAETTRLDFLLFSESNGRFITAGEEGPGVKIGEAEGEKLRLRCGGTLLYKRKVEELRELMALRL.

The active site involves H34. Y37 and K76 together coordinate ATP. Residue E78 participates in Mg(2+) binding. Substrate contacts are provided by residues 79–82 and R101; that span reads SHNH. H80 acts as the Proton acceptor in catalysis. D102 provides a ligand contact to Mg(2+). Q222 contacts substrate. D248 contributes to the Mg(2+) binding site. Residue 292-294 coordinates substrate; the sequence is ETQ. Residues D470 and G507 each coordinate ATP. Residue S510 participates in substrate binding.

The protein belongs to the FGAMS family. In terms of assembly, monomer. Part of the FGAM synthase complex composed of 1 PurL, 1 PurQ and 2 PurS subunits.

It is found in the cytoplasm. It catalyses the reaction N(2)-formyl-N(1)-(5-phospho-beta-D-ribosyl)glycinamide + L-glutamine + ATP + H2O = 2-formamido-N(1)-(5-O-phospho-beta-D-ribosyl)acetamidine + L-glutamate + ADP + phosphate + H(+). It participates in purine metabolism; IMP biosynthesis via de novo pathway; 5-amino-1-(5-phospho-D-ribosyl)imidazole from N(2)-formyl-N(1)-(5-phospho-D-ribosyl)glycinamide: step 1/2. Functionally, part of the phosphoribosylformylglycinamidine synthase complex involved in the purines biosynthetic pathway. Catalyzes the ATP-dependent conversion of formylglycinamide ribonucleotide (FGAR) and glutamine to yield formylglycinamidine ribonucleotide (FGAM) and glutamate. The FGAM synthase complex is composed of three subunits. PurQ produces an ammonia molecule by converting glutamine to glutamate. PurL transfers the ammonia molecule to FGAR to form FGAM in an ATP-dependent manner. PurS interacts with PurQ and PurL and is thought to assist in the transfer of the ammonia molecule from PurQ to PurL. In Pyrobaculum calidifontis (strain DSM 21063 / JCM 11548 / VA1), this protein is Phosphoribosylformylglycinamidine synthase subunit PurL.